Reading from the N-terminus, the 358-residue chain is Protein ocs (358 aa).

It belongs to the lysopine/nopaline/octopine/opine/vitopine dehydrogenases family.

It carries out the reaction D-octopine + NAD(+) + H2O = L-arginine + pyruvate + NADH + H(+). The catalysed reaction is D-lysopine + NADP(+) + H2O = L-lysine + pyruvate + NADPH + H(+). Its function is as follows. Reductive condensation of pyruvate and arginine, lysine, histidine, or octopine to form octopine, lysopine, histopine, or octopinic acid, respectively. NADPH is the preferred cofactor, but NADH can also be used. This is Protein ocs (ocs) from Agrobacterium vitis (Rhizobium vitis).